A 287-amino-acid polypeptide reads, in one-letter code: Cyclopropane mycolic acid synthase 3 (287 aa).

Residues 33–34 (YS), 68–76 (LLDIGCGWG), 94–99 (TLSENQ), and 123–124 (WE) each bind S-adenosyl-L-methionine. Cys-269 is an active-site residue.

Belongs to the CFA/CMAS family. As to quaternary structure, homodimer.

The protein localises to the cytoplasm. The enzyme catalyses a 1-acyl-2-(9Z)-enoyl-sn-glycero-3-phospholipid + S-adenosyl-L-methionine = a 1-acyl-2-(9-cyclopronane)-acyl-sn-glycero-3-phospholipid + S-adenosyl-L-homocysteine + H(+). It participates in lipid metabolism; mycolic acid biosynthesis. Involved in the phagosome maturation block (PMB). Catalyzes the conversion of a double bond to a cyclopropane ring at the proximal position of an alpha mycolic acid via the transfer of a methylene group from S-adenosyl-L-methionine. It can use cis, cis 11,14-eicosadienoic acid and linoelaidic acid as substrate. Cyclopropanated mycolic acids are key factors participating in cell envelope permeability, host immunomodulation and persistence. The sequence is that of Cyclopropane mycolic acid synthase 3 (pcaA) from Mycobacterium tuberculosis (strain CDC 1551 / Oshkosh).